The following is a 775-amino-acid chain: Transposon TX1 uncharacterized 82 kDa protein (775 aa).

Residues 1-10 are compositionally biased toward basic and acidic residues; it reads MGGNKKESYK. Disordered regions lie at residues 1–46, 256–277, and 535–565; these read MGGN…ASTS, PKGQ…KTSY, and PIQD…TSTV. Positions 35-46 are enriched in polar residues; it reads EPMSKSPIASTS. The segment covering 539 to 549 has biased composition (basic and acidic residues); sequence PADKTAGKDGE.

This Xenopus laevis (African clawed frog) protein is Transposon TX1 uncharacterized 82 kDa protein.